We begin with the raw amino-acid sequence, 514 residues long: Peptide chain release factor 3 (514 aa).

The tr-type G domain occupies 8-268 (KKRRTFAIIS…IFLKFAPEPH (261 aa)). GTP is bound by residues 17 to 24 (SHPDAGKT), 85 to 89 (DTPGH), and 139 to 142 (NKLD).

Belongs to the TRAFAC class translation factor GTPase superfamily. Classic translation factor GTPase family. PrfC subfamily.

The protein resides in the cytoplasm. Functionally, increases the formation of ribosomal termination complexes and stimulates activities of RF-1 and RF-2. It binds guanine nucleotides and has strong preference for UGA stop codons. It may interact directly with the ribosome. The stimulation of RF-1 and RF-2 is significantly reduced by GTP and GDP, but not by GMP. This Streptococcus pneumoniae (strain 70585) protein is Peptide chain release factor 3.